We begin with the raw amino-acid sequence, 164 residues long: MRVLGIDPGIAIVGYSILDYDNNKIKCLEYGCITTSSKSALPDRLSFIYQEMNKIIDEFQPDDCAFEELFFNKNVKTAITVSQARGVEILSCINKDLRLYEYTPLQIKQAVVGYGRADKRQVQETVKTILKFNEIPKPDDAADAVAVALCHIFGSKFKYLNEMK.

Active-site residues include D7, E67, and D140. Residues D7, E67, and D140 each contribute to the Mg(2+) site.

The protein belongs to the RuvC family. In terms of assembly, homodimer which binds Holliday junction (HJ) DNA. The HJ becomes 2-fold symmetrical on binding to RuvC with unstacked arms; it has a different conformation from HJ DNA in complex with RuvA. In the full resolvosome a probable DNA-RuvA(4)-RuvB(12)-RuvC(2) complex forms which resolves the HJ. Mg(2+) is required as a cofactor.

The protein resides in the cytoplasm. It catalyses the reaction Endonucleolytic cleavage at a junction such as a reciprocal single-stranded crossover between two homologous DNA duplexes (Holliday junction).. The RuvA-RuvB-RuvC complex processes Holliday junction (HJ) DNA during genetic recombination and DNA repair. Endonuclease that resolves HJ intermediates. Cleaves cruciform DNA by making single-stranded nicks across the HJ at symmetrical positions within the homologous arms, yielding a 5'-phosphate and a 3'-hydroxyl group; requires a central core of homology in the junction. The consensus cleavage sequence is 5'-(A/T)TT(C/G)-3'. Cleavage occurs on the 3'-side of the TT dinucleotide at the point of strand exchange. HJ branch migration catalyzed by RuvA-RuvB allows RuvC to scan DNA until it finds its consensus sequence, where it cleaves and resolves the cruciform DNA. This Finegoldia magna (strain ATCC 29328 / DSM 20472 / WAL 2508) (Peptostreptococcus magnus) protein is Crossover junction endodeoxyribonuclease RuvC.